Here is a 140-residue protein sequence, read N- to C-terminus: Small ribosomal subunit protein eS17x (140 aa).

This sequence belongs to the eukaryotic ribosomal protein eS17 family.

The chain is Small ribosomal subunit protein eS17x (RPS17C) from Arabidopsis thaliana (Mouse-ear cress).